The sequence spans 561 residues: uncharacterized protein (561 aa).

Positions 1 to 11 are enriched in polar residues; sequence MSQVSLPSQLK. Disordered regions lie at residues 1-22 and 522-561; these read MSQV…SRCR and CSLP…IMLP. The span at 541 to 561 shows a compositional bias: low complexity; sequence QQPQQAQAEQAQQPQQQIMLP.

To Synechocystis PCC 6803 sll0335 and to M.tuberculosis Rv2567.

This is an uncharacterized protein from Mycobacterium leprae (strain TN).